The primary structure comprises 92 residues: Small ribosomal subunit protein uS19 (92 aa).

Belongs to the universal ribosomal protein uS19 family.

Protein S19 forms a complex with S13 that binds strongly to the 16S ribosomal RNA. In Azorhizobium caulinodans (strain ATCC 43989 / DSM 5975 / JCM 20966 / LMG 6465 / NBRC 14845 / NCIMB 13405 / ORS 571), this protein is Small ribosomal subunit protein uS19.